Consider the following 526-residue polypeptide: Peptide chain release factor 3 (526 aa).

One can recognise a tr-type G domain in the interval 9–277 (NKRRTFAIIS…DFVEYAPGPQ (269 aa)). Residues 18–25 (SHPDAGKT), 86–90 (DTPGH), and 140–143 (NKLD) each bind GTP.

This sequence belongs to the TRAFAC class translation factor GTPase superfamily. Classic translation factor GTPase family. PrfC subfamily.

Its subcellular location is the cytoplasm. In terms of biological role, increases the formation of ribosomal termination complexes and stimulates activities of RF-1 and RF-2. It binds guanine nucleotides and has strong preference for UGA stop codons. It may interact directly with the ribosome. The stimulation of RF-1 and RF-2 is significantly reduced by GTP and GDP, but not by GMP. The sequence is that of Peptide chain release factor 3 from Legionella pneumophila (strain Corby).